A 632-amino-acid polypeptide reads, in one-letter code: tRNA uridine 5-carboxymethylaminomethyl modification enzyme MnmG (632 aa).

FAD contacts are provided by residues 15 to 20, Ile-127, and Ser-182; that span reads GAGHAG. Residue 276 to 290 coordinates NAD(+); that stretch reads GPRYCPSIEDKIVRF. Gln-373 lines the FAD pocket.

The protein belongs to the MnmG family. Homodimer. Heterotetramer of two MnmE and two MnmG subunits. Requires FAD as cofactor.

The protein localises to the cytoplasm. NAD-binding protein involved in the addition of a carboxymethylaminomethyl (cmnm) group at the wobble position (U34) of certain tRNAs, forming tRNA-cmnm(5)s(2)U34. The protein is tRNA uridine 5-carboxymethylaminomethyl modification enzyme MnmG of Streptococcus pyogenes serotype M6 (strain ATCC BAA-946 / MGAS10394).